The primary structure comprises 101 residues: MGTPELKIILEFSAGAELLFGNIKRRELALDGNQKWTIANLLKWMHANILTERPELFLQGDTVRPGILVLINDTDWELLGELDYELQPNDNVLFISTLHGG.

Residue Gly101 is modified to 1-thioglycine. A Glycyl lysine isopeptide (Gly-Lys) (interchain with K-? in acceptor proteins) cross-link involves residue Gly101.

It belongs to the URM1 family. As to quaternary structure, interacts with cer. Post-translationally, C-terminal thiocarboxylation occurs in 2 steps, it is first acyl-adenylated (-COAMP) via the hesA/moeB/thiF part of the MOCS3 homolog, then thiocarboxylated (-COSH) via the rhodanese domain of the MOCS3 homolog.

It is found in the cytoplasm. Its pathway is tRNA modification; 5-methoxycarbonylmethyl-2-thiouridine-tRNA biosynthesis. Acts as a sulfur carrier required for 2-thiolation of mcm(5)S(2)U at tRNA wobble positions of cytosolic tRNA(Lys), tRNA(Glu) and tRNA(Gln). Serves as sulfur donor in tRNA 2-thiolation reaction by being thiocarboxylated (-COSH) at its C-terminus by MOCS3. The sulfur is then transferred to tRNA to form 2-thiolation of mcm(5)S(2)U. Also acts as a ubiquitin-like protein (UBL) that is covalently conjugated via an isopeptide bond to lysine residues of target proteins such as Prx2/Jafrac1, Ciao1, Eip71CD and GILT1. The thiocarboxylated form serves as substrate for conjugation and oxidative stress specifically induces the formation of UBL-protein conjugates. The polypeptide is Ubiquitin-related modifier 1 homolog (Drosophila erecta (Fruit fly)).